A 282-amino-acid chain; its full sequence is Bifunctional protein FolD (282 aa).

NADP(+)-binding positions include 167-169 and S192; that span reads GRS.

It belongs to the tetrahydrofolate dehydrogenase/cyclohydrolase family. In terms of assembly, homodimer.

The catalysed reaction is (6R)-5,10-methylene-5,6,7,8-tetrahydrofolate + NADP(+) = (6R)-5,10-methenyltetrahydrofolate + NADPH. The enzyme catalyses (6R)-5,10-methenyltetrahydrofolate + H2O = (6R)-10-formyltetrahydrofolate + H(+). Its pathway is one-carbon metabolism; tetrahydrofolate interconversion. Catalyzes the oxidation of 5,10-methylenetetrahydrofolate to 5,10-methenyltetrahydrofolate and then the hydrolysis of 5,10-methenyltetrahydrofolate to 10-formyltetrahydrofolate. The sequence is that of Bifunctional protein FolD from Acidobacterium capsulatum (strain ATCC 51196 / DSM 11244 / BCRC 80197 / JCM 7670 / NBRC 15755 / NCIMB 13165 / 161).